The primary structure comprises 363 residues: Phosphoserine aminotransferase (363 aa).

L-glutamate is bound at residue Arg41. Residues 75–76 (AS), Trp100, Thr155, Asp175, and Gln198 contribute to the pyridoxal 5'-phosphate site. N6-(pyridoxal phosphate)lysine is present on Lys199. Residue 239–240 (NT) participates in pyridoxal 5'-phosphate binding.

The protein belongs to the class-V pyridoxal-phosphate-dependent aminotransferase family. SerC subfamily. Homodimer. Pyridoxal 5'-phosphate is required as a cofactor.

It localises to the cytoplasm. The enzyme catalyses O-phospho-L-serine + 2-oxoglutarate = 3-phosphooxypyruvate + L-glutamate. The catalysed reaction is 4-(phosphooxy)-L-threonine + 2-oxoglutarate = (R)-3-hydroxy-2-oxo-4-phosphooxybutanoate + L-glutamate. It functions in the pathway amino-acid biosynthesis; L-serine biosynthesis; L-serine from 3-phospho-D-glycerate: step 2/3. Catalyzes the reversible conversion of 3-phosphohydroxypyruvate to phosphoserine and of 3-hydroxy-2-oxo-4-phosphonooxybutanoate to phosphohydroxythreonine. The chain is Phosphoserine aminotransferase from Streptococcus suis (strain 98HAH33).